Here is a 219-residue protein sequence, read N- to C-terminus: Dynein light chain Tctex-type 4 (219 aa).

A disordered region spans residues M1–P84. Residues R9 to A20 show a composition bias toward basic and acidic residues. S64 carries the phosphoserine modification.

It belongs to the dynein light chain Tctex-type family. Interacts with ENG/endoglin, TGFBR2 and TGFBR3. Interacts with PPP1CC.

The protein localises to the cell projection. Its subcellular location is the cilium. It is found in the flagellum. It localises to the cytoplasmic vesicle. The protein resides in the secretory vesicle. The protein localises to the acrosome. Its subcellular location is the cytoplasm. It is found in the cytoskeleton. It localises to the cilium axoneme. The protein resides in the nucleus. The protein localises to the microtubule organizing center. The chain is Dynein light chain Tctex-type 4 (Dynlt4) from Mus musculus (Mouse).